We begin with the raw amino-acid sequence, 230 residues long: Octanoyltransferase (230 aa).

One can recognise a BPL/LPL catalytic domain in the interval 31 to 230 (PETPDELWIC…GDKLTRYLAP (200 aa)). Residues 70–77 (RGGQVTYH), 163–165 (ALG), and 176–178 (GVA) each bind substrate. The Acyl-thioester intermediate role is filled by Cys194.

Belongs to the LipB family.

The protein localises to the cytoplasm. The enzyme catalyses octanoyl-[ACP] + L-lysyl-[protein] = N(6)-octanoyl-L-lysyl-[protein] + holo-[ACP] + H(+). It participates in protein modification; protein lipoylation via endogenous pathway; protein N(6)-(lipoyl)lysine from octanoyl-[acyl-carrier-protein]: step 1/2. Functionally, catalyzes the transfer of endogenously produced octanoic acid from octanoyl-acyl-carrier-protein onto the lipoyl domains of lipoate-dependent enzymes. Lipoyl-ACP can also act as a substrate although octanoyl-ACP is likely to be the physiological substrate. The sequence is that of Octanoyltransferase from Albidiferax ferrireducens (strain ATCC BAA-621 / DSM 15236 / T118) (Rhodoferax ferrireducens).